We begin with the raw amino-acid sequence, 877 residues long: Phosphoenolpyruvate carboxylase (877 aa).

Residues histidine 137 and lysine 542 contribute to the active site.

This sequence belongs to the PEPCase type 1 family. The cofactor is Mg(2+).

It carries out the reaction oxaloacetate + phosphate = phosphoenolpyruvate + hydrogencarbonate. Functionally, forms oxaloacetate, a four-carbon dicarboxylic acid source for the tricarboxylic acid cycle. The chain is Phosphoenolpyruvate carboxylase from Tolumonas auensis (strain DSM 9187 / NBRC 110442 / TA 4).